Consider the following 505-residue polypeptide: MRADSGAQGSAAQDIMINPLDSYNIRVVTPTSCDKYPGRYTSPYSAHRKHHARNVARKLGASSGLIFLSGQPTINLRDSDQSRPFRQRRYFYYLSGVDEPDCSLTYDIEQDLLSLYVPDFDLHRAIWMGPTLSREDAQDRYDVDHVRYHASLKYELQAWLDERKQGSELYLIHDSEKPEHLPKDLPLNLEQLRPAMDTARGVKDEYEIRMIRQANKVSGLAHRRILESIQSMSNESQIEGSFLNTCISHGARNQAYQIIAASGPNAAVLHYDRNNETLNKKPLVCLDAGAEWNCYASDVTRTFPLTGEWPSDYVRDIYKLVERMQDECIRLIRKGTRYLSLHNLAHDIAIEGLLALGVFKNGTIHELRQSGVSKVFFPHGLGHHVGLEVHDVSERSIMAIQRSDELQYRPILNSTCLPPCTLSAPLLEEGMVVTVEPGLYFSPLAMANARHQPYARYIDFDVAEKYVHIGGVRIEDDILVTATGYENLTTAPKGEEMLAIIRGSA.

Asp-287, Asp-298, Glu-436, and Glu-475 together coordinate Mn(2+).

The protein belongs to the peptidase M24B family. It depends on Mn(2+) as a cofactor.

It carries out the reaction Release of any N-terminal amino acid, including proline, that is linked to proline, even from a dipeptide or tripeptide.. Its function is as follows. Catalyzes the removal of a penultimate prolyl residue from the N-termini of peptides. The chain is Probable Xaa-Pro aminopeptidase Pc16g13390 from Penicillium rubens (strain ATCC 28089 / DSM 1075 / NRRL 1951 / Wisconsin 54-1255) (Penicillium chrysogenum).